Consider the following 407-residue polypeptide: Peptidase T (407 aa).

Histidine 82 contacts Zn(2+). The active site involves aspartate 84. Zn(2+) is bound at residue aspartate 143. Residue glutamate 177 is the Proton acceptor of the active site. Zn(2+) contacts are provided by glutamate 178, aspartate 200, and histidine 382.

The protein belongs to the peptidase M20B family. Zn(2+) serves as cofactor.

The protein resides in the cytoplasm. It catalyses the reaction Release of the N-terminal residue from a tripeptide.. In terms of biological role, cleaves the N-terminal amino acid of tripeptides. In Streptococcus thermophilus (strain ATCC BAA-491 / LMD-9), this protein is Peptidase T.